The chain runs to 125 residues: UPF0231 protein APP7_1023 (125 aa).

The protein belongs to the UPF0231 family.

In Actinobacillus pleuropneumoniae serotype 7 (strain AP76), this protein is UPF0231 protein APP7_1023.